A 288-amino-acid chain; its full sequence is uncharacterized protein (288 aa).

The N-terminal stretch at 1 to 27 (MKFEFRTLVLISLAVVVVLSGCSQSPS) is a signal peptide. Residues 144–167 (GESGEAGGAGEQLPASDQASGEEP) are disordered.

This is an uncharacterized protein from Archaeoglobus fulgidus (strain ATCC 49558 / DSM 4304 / JCM 9628 / NBRC 100126 / VC-16).